The following is a 249-amino-acid chain: Triosephosphate isomerase (249 aa).

Residue 9 to 11 (NWK) participates in substrate binding. The active-site Electrophile is H94. E166 (proton acceptor) is an active-site residue. Substrate contacts are provided by residues G172, S214, and 235–236 (GG).

The protein belongs to the triosephosphate isomerase family. In terms of assembly, homodimer.

It localises to the cytoplasm. The catalysed reaction is D-glyceraldehyde 3-phosphate = dihydroxyacetone phosphate. The protein operates within carbohydrate biosynthesis; gluconeogenesis. Its pathway is carbohydrate degradation; glycolysis; D-glyceraldehyde 3-phosphate from glycerone phosphate: step 1/1. Its function is as follows. Involved in the gluconeogenesis. Catalyzes stereospecifically the conversion of dihydroxyacetone phosphate (DHAP) to D-glyceraldehyde-3-phosphate (G3P). In Leptospira biflexa serovar Patoc (strain Patoc 1 / Ames), this protein is Triosephosphate isomerase.